A 375-amino-acid polypeptide reads, in one-letter code: Ribosomal RNA large subunit methyltransferase F (375 aa).

Disordered regions lie at residues 1-39 and 262-281; these read MKNNSHNAKQAPSKAAKPKHDNDVNKAKPKRVKKKAAVK and NQRKKGVKQQNSPVKQGKPT. Residues 27-38 are compositionally biased toward basic residues; the sequence is AKPKRVKKKAAV.

The protein belongs to the methyltransferase superfamily. METTL16/RlmF family.

It localises to the cytoplasm. The enzyme catalyses adenosine(1618) in 23S rRNA + S-adenosyl-L-methionine = N(6)-methyladenosine(1618) in 23S rRNA + S-adenosyl-L-homocysteine + H(+). Functionally, specifically methylates the adenine in position 1618 of 23S rRNA. This is Ribosomal RNA large subunit methyltransferase F from Vibrio parahaemolyticus serotype O3:K6 (strain RIMD 2210633).